The chain runs to 314 residues: GTP cyclohydrolase FolE2 (314 aa).

The tract at residues 290 to 314 (DASAWSAPQASAPDQQESFATGNER) is disordered. The segment covering 291-305 (ASAWSAPQASAPDQQ) has biased composition (low complexity).

Belongs to the GTP cyclohydrolase IV family.

The enzyme catalyses GTP + H2O = 7,8-dihydroneopterin 3'-triphosphate + formate + H(+). The protein operates within cofactor biosynthesis; 7,8-dihydroneopterin triphosphate biosynthesis; 7,8-dihydroneopterin triphosphate from GTP: step 1/1. In terms of biological role, converts GTP to 7,8-dihydroneopterin triphosphate. The sequence is that of GTP cyclohydrolase FolE2 from Pseudomonas putida (strain ATCC 700007 / DSM 6899 / JCM 31910 / BCRC 17059 / LMG 24140 / F1).